We begin with the raw amino-acid sequence, 453 residues long: GTPase Der (453 aa).

EngA-type G domains lie at 4 to 169 (PIVA…PPTT) and 177 to 352 (IKIA…EEHK). GTP-binding positions include 10–17 (GRPNVGKS), 57–61 (DTGGL), 120–123 (NKCE), 183–190 (GRPNVGKS), 230–234 (DTAGI), and 295–298 (NKWD). Positions 353 to 438 (RRVSTSVINE…PIRLLWRSKK (86 aa)) constitute a KH-like domain.

Belongs to the TRAFAC class TrmE-Era-EngA-EngB-Septin-like GTPase superfamily. EngA (Der) GTPase family. As to quaternary structure, associates with the 50S ribosomal subunit.

Functionally, GTPase that plays an essential role in the late steps of ribosome biogenesis. This is GTPase Der from Trichormus variabilis (strain ATCC 29413 / PCC 7937) (Anabaena variabilis).